The sequence spans 96 residues: Large ribosomal subunit protein uL23 (96 aa).

Belongs to the universal ribosomal protein uL23 family. In terms of assembly, part of the 50S ribosomal subunit. Contacts protein L29, and trigger factor when it is bound to the ribosome.

One of the early assembly proteins it binds 23S rRNA. One of the proteins that surrounds the polypeptide exit tunnel on the outside of the ribosome. Forms the main docking site for trigger factor binding to the ribosome. This chain is Large ribosomal subunit protein uL23, found in Bacillus cereus (strain ATCC 10987 / NRS 248).